The primary structure comprises 451 residues: Trigger factor (451 aa).

One can recognise a PPIase FKBP-type domain in the interval 165-250 (DDKLTIDFEG…LHQIQAREAL (86 aa)).

This sequence belongs to the FKBP-type PPIase family. Tig subfamily.

Its subcellular location is the cytoplasm. The enzyme catalyses [protein]-peptidylproline (omega=180) = [protein]-peptidylproline (omega=0). In terms of biological role, involved in protein export. Acts as a chaperone by maintaining the newly synthesized protein in an open conformation. Functions as a peptidyl-prolyl cis-trans isomerase. The sequence is that of Trigger factor from Helicobacter pylori (strain HPAG1).